Here is a 405-residue protein sequence, read N- to C-terminus: L-carnitine CoA-transferase (405 aa).

2 residues coordinate CoA: Lys97 and Arg104. Asp169 (nucleophile) is an active-site residue.

The protein belongs to the CoA-transferase III family. CaiB subfamily. As to quaternary structure, homodimer.

It localises to the cytoplasm. It catalyses the reaction crotonobetainyl-CoA + (R)-carnitine = crotonobetaine + (R)-carnitinyl-CoA. It carries out the reaction 4-(trimethylamino)butanoyl-CoA + (R)-carnitine = (R)-carnitinyl-CoA + 4-(trimethylamino)butanoate. It functions in the pathway amine and polyamine metabolism; carnitine metabolism. Its function is as follows. Catalyzes the reversible transfer of the CoA moiety from gamma-butyrobetainyl-CoA to L-carnitine to generate L-carnitinyl-CoA and gamma-butyrobetaine. Is also able to catalyze the reversible transfer of the CoA moiety from gamma-butyrobetainyl-CoA or L-carnitinyl-CoA to crotonobetaine to generate crotonobetainyl-CoA. The protein is L-carnitine CoA-transferase of Escherichia coli O17:K52:H18 (strain UMN026 / ExPEC).